The chain runs to 1040 residues: Myoblast growth factor receptor egl-15 (1040 aa).

A signal peptide spans 1 to 19; sequence MSYFLASCLGVGLLSTVSC. The Extracellular portion of the chain corresponds to 20 to 525; it reads SLQGLTSHYR…PKIDRWTTSD (506 aa). In terms of domain architecture, Ig-like C2-type 1 spans 33-125; the sequence is PRFKHVANER…GQISRNFTVE (93 aa). Cysteine 55 and cysteine 109 are disulfide-bonded. The N-linked (GlcNAc...) asparagine glycan is linked to asparagine 121. The segment covering 234–257 has biased composition (basic and acidic residues); the sequence is VHDSEESPSESRTEFINADEKENK. The interval 234–267 is disordered; sequence VHDSEESPSESRTEFINADEKENKEDEEEDYSVS. N-linked (GlcNAc...) asparagine glycosylation is found at asparagine 280 and asparagine 299. 2 Ig-like C2-type domains span residues 287-383 and 391-501; these read PYFK…FHVI and PPII…ATLT. An intrachain disulfide couples cysteine 314 to cysteine 367. N-linked (GlcNAc...) asparagine glycans are attached at residues asparagine 401, asparagine 407, asparagine 433, asparagine 440, asparagine 449, asparagine 474, and asparagine 497. Cysteines 414 and 485 form a disulfide. A helical transmembrane segment spans residues 526 to 549; sequence YIFTTILLFLLLAATLFGILFMVC. The Cytoplasmic segment spans residues 550–1040; the sequence is KQTLHKKGFM…NNNSMSKPEF (491 aa). The 292-residue stretch at 640–931 folds into the Protein kinase domain; that stretch reads LSLVHMLGEG…KTIVDYLDWM (292 aa). Residues 646-654 and lysine 672 contribute to the ATP site; that span reads LGEGAFGEV. The Proton acceptor role is filled by aspartate 797. At tyrosine 828 the chain carries Phosphotyrosine; by autocatalysis. 2 disordered regions span residues 952-984 and 1021-1040; these read ERSTASGPVSPMESFQKKRKHRPLSAPVNLPSE and TPETSQRIPSNNNSMSKPEF. Positions 1022 to 1040 are enriched in polar residues; the sequence is PETSQRIPSNNNSMSKPEF.

Belongs to the protein kinase superfamily. Tyr protein kinase family. Fibroblast growth factor receptor subfamily. The cofactor is Mg(2+). Activity is regulated by the phosphatase clr-1, however it is not known whether clr-1 acts directly on egl-15.

It localises to the membrane. The enzyme catalyses L-tyrosyl-[protein] + ATP = O-phospho-L-tyrosyl-[protein] + ADP + H(+). Receptor tyrosine kinase required for larval development. May phosphorylate adapter protein soc-1 which in turn may result in the recruitment and/or activation of phosphatase ptp-2. May activate the Ras/MAPK kinase signaling pathway which includes sem-5, sos-1, let-60/Ras, lin-45/Raf, mek-2 and mpk-1. Acts in the hypodermis to regulate axon growth and fluid homeostasis. Activates protein degradation in muscles. Probably following interaction with ligand let-756, negatively regulates membrane protrusion from body wall muscles during larval development. Plays a role in nicotinic acetylcholine receptor (nAChR)-mediated sensitivity to nicotine. Regulates synaptic levels of nAChR subunit lev-1 in the nerve cord. Functionally, affects the maintenance of axon position without affecting axon growth. Interaction with egl-17 is required for the guidance of sex myoblast migration during gonad development. In terms of biological role, interaction with let-756 appears to play a role in maintaining body morphology at higher temperatures. The protein is Myoblast growth factor receptor egl-15 (egl-15) of Caenorhabditis elegans.